Here is a 205-residue protein sequence, read N- to C-terminus: Holliday junction branch migration complex subunit RuvA (205 aa).

The tract at residues 1–64 (MIGKLKGVVD…EDMIRLYGFR (64 aa)) is domain I. The domain II stretch occupies residues 65-143 (SDAEREWFRL…AFAPVDPALV (79 aa)). Positions 144 to 152 (RLAGAVEAR) are flexible linker. A domain III region spans residues 153–205 (TAPQPVADAISALVNLGYPQAQASAAVAAALQSAGAEAEAKTLIRLGLRELAR).

Belongs to the RuvA family. In terms of assembly, homotetramer. Forms an RuvA(8)-RuvB(12)-Holliday junction (HJ) complex. HJ DNA is sandwiched between 2 RuvA tetramers; dsDNA enters through RuvA and exits via RuvB. An RuvB hexamer assembles on each DNA strand where it exits the tetramer. Each RuvB hexamer is contacted by two RuvA subunits (via domain III) on 2 adjacent RuvB subunits; this complex drives branch migration. In the full resolvosome a probable DNA-RuvA(4)-RuvB(12)-RuvC(2) complex forms which resolves the HJ.

The protein resides in the cytoplasm. The RuvA-RuvB-RuvC complex processes Holliday junction (HJ) DNA during genetic recombination and DNA repair, while the RuvA-RuvB complex plays an important role in the rescue of blocked DNA replication forks via replication fork reversal (RFR). RuvA specifically binds to HJ cruciform DNA, conferring on it an open structure. The RuvB hexamer acts as an ATP-dependent pump, pulling dsDNA into and through the RuvAB complex. HJ branch migration allows RuvC to scan DNA until it finds its consensus sequence, where it cleaves and resolves the cruciform DNA. This chain is Holliday junction branch migration complex subunit RuvA, found in Methylobacterium sp. (strain 4-46).